Consider the following 224-residue polypeptide: Peroxiredoxin-like 2A (224 aa).

Positions methionine 14–valine 112 are thioredoxin fold. A non-standard amino acid (selenocysteine) is located at residue selenocysteine 85. Cysteine 88 acts as the Redox-active in catalysis.

The protein belongs to the peroxiredoxin-like PRXL2 family. PRXL2A subfamily.

Its subcellular location is the cytoplasm. In terms of biological role, involved in redox regulation of the cell. Acts as an antioxidant. Inhibits TNFSF11-induced NFKB1 and JUN activation and osteoclast differentiation. May affect bone resorption and help to maintain bone mass. This chain is Peroxiredoxin-like 2A (PRXL2A), found in Gallus gallus (Chicken).